The following is a 79-amino-acid chain: Small ribosomal subunit protein bS16 (79 aa).

It belongs to the bacterial ribosomal protein bS16 family.

This chain is Small ribosomal subunit protein bS16, found in Marinobacter nauticus (strain ATCC 700491 / DSM 11845 / VT8) (Marinobacter aquaeolei).